A 142-amino-acid chain; its full sequence is Nucleoside diphosphate kinase (142 aa).

ATP is bound by residues K10, F58, R86, T92, R103, and N113. The active-site Pros-phosphohistidine intermediate is H116.

Belongs to the NDK family. Homotetramer. Mg(2+) is required as a cofactor.

The protein localises to the cytoplasm. It catalyses the reaction a 2'-deoxyribonucleoside 5'-diphosphate + ATP = a 2'-deoxyribonucleoside 5'-triphosphate + ADP. The enzyme catalyses a ribonucleoside 5'-diphosphate + ATP = a ribonucleoside 5'-triphosphate + ADP. Major role in the synthesis of nucleoside triphosphates other than ATP. The ATP gamma phosphate is transferred to the NDP beta phosphate via a ping-pong mechanism, using a phosphorylated active-site intermediate. The sequence is that of Nucleoside diphosphate kinase from Ehrlichia chaffeensis (strain ATCC CRL-10679 / Arkansas).